We begin with the raw amino-acid sequence, 332 residues long: Twinfilin-1 (332 aa).

An ADF-H 1 domain is found at S5–R132. 2 positions are modified to phosphoserine: S167 and S172. The ADF-H 2 domain occupies P173–K300. A disordered region spans residues E301–T332. Basic residues predominate over residues N321 to T332.

Belongs to the actin-binding proteins ADF family. Twinfilin subfamily. As to quaternary structure, interacts with G-actin; ADP-actin form.

The protein resides in the cytoplasm. Its subcellular location is the cytoskeleton. Its function is as follows. Actin-binding protein involved in motile and morphological processes. Inhibits actin polymerization, likely by sequestering G-actin. Prevents actin filament assembly by forming a 1:1 complex with actin monomers, and inhibits the nucleotide exchange reaction of actin monomers. This Saccharomyces cerevisiae (strain ATCC 204508 / S288c) (Baker's yeast) protein is Twinfilin-1 (TWF1).